The primary structure comprises 367 residues: Homoserine O-acetyltransferase (367 aa).

The AB hydrolase-1 domain maps to 44–350; it reads NAILVTHAWT…AYGHDAFLLE (307 aa). Serine 150 acts as the Nucleophile in catalysis. Arginine 217 serves as a coordination point for substrate. Active-site residues include aspartate 311 and histidine 344. Aspartate 345 serves as a coordination point for substrate.

Belongs to the AB hydrolase superfamily. MetX family. In terms of assembly, homodimer.

It is found in the cytoplasm. The enzyme catalyses L-homoserine + acetyl-CoA = O-acetyl-L-homoserine + CoA. It functions in the pathway amino-acid biosynthesis; L-methionine biosynthesis via de novo pathway; O-acetyl-L-homoserine from L-homoserine: step 1/1. Its function is as follows. Transfers an acetyl group from acetyl-CoA to L-homoserine, forming acetyl-L-homoserine. The protein is Homoserine O-acetyltransferase of Citrifermentans bemidjiense (strain ATCC BAA-1014 / DSM 16622 / JCM 12645 / Bem) (Geobacter bemidjiensis).